The following is a 375-amino-acid chain: LIM domain-binding protein 1 (375 aa).

2 disordered regions span residues 248 to 294 and 331 to 375; these read PPAE…TFAL and DAAN…QASQ. Residues 266 to 282 show a composition bias toward low complexity; the sequence is SGGSTMSSGGGNTNNSN. The 40-residue stretch at 300-339 folds into the LIM interaction domain (LID) domain; it reads DVMVVGEPTLMGGEFGDEDERLITRLENTQFDAANGIDDE.

Belongs to the LDB family. Forms homodimers and heterodimers. Interacts with the LIM domain of LIM/homeobox factor lhx1/lim1, and with lhx3/lim3 and lhx5/lim5. Activates lhx1/lim1 by binding. The stoichiometry of lhx1/lim1 and ldb1 is important for their function and an excess of ldb1 can inhibit lhx1/lim1 function. When bound to lhx1/lim1, escapes degradation by rnf12. The N-terminus interacts with the N-terminal region of rnf12. In terms of processing, undergoes rnf12-mediated ubiquitin-proteasome-dependent degradation. As to expression, ubiquitously expressed in the early gastrula before localizing to the dorsal region of the vegetal hemisphere, which contains the Spemann organizer. Expressed in the CNS, pronephros and tail bud in neurula and tail-bud stage embryos. Expressed in multiple adult tissues including brain, heart, lung, stomach, intestine, liver, spleen, kidney, ovary, muscle and skin.

The protein localises to the nucleus. Functionally, binds to the LIM domain of a wide variety of LIM domain-containing transcription factors. Acts as a coactivator together with otx2 to stimulate lhx1/lim1-mediated activation of the gsc promoter in the Spemann organizer. Acts synergistically with lhx1/lim1 and ssbp in axis formation. This chain is LIM domain-binding protein 1 (ldb1), found in Xenopus laevis (African clawed frog).